We begin with the raw amino-acid sequence, 368 residues long: Isocitrate dehydrogenase [NAD] subunit 2, mitochondrial (368 aa).

The N-terminal 14 residues, 1–14 (MFRQSIVKQSCRFL), are a transit peptide targeting the mitochondrion. Substrate-binding residues include Arg-118, Arg-128, Arg-149, and Asp-236. Residues Asp-236, Asp-262, and Asp-266 each coordinate Mg(2+).

This sequence belongs to the isocitrate and isopropylmalate dehydrogenases family. Octamer of two non-identical subunits IDH1 and IDH2. Requires Mg(2+) as cofactor. Mn(2+) is required as a cofactor.

The protein resides in the mitochondrion. The enzyme catalyses D-threo-isocitrate + NAD(+) = 2-oxoglutarate + CO2 + NADH. In terms of biological role, performs an essential role in the oxidative function of the citric acid cycle. This chain is Isocitrate dehydrogenase [NAD] subunit 2, mitochondrial (IDH2), found in Kluyveromyces lactis (strain ATCC 8585 / CBS 2359 / DSM 70799 / NBRC 1267 / NRRL Y-1140 / WM37) (Yeast).